Here is a 120-residue protein sequence, read N- to C-terminus: UPF0102 protein PTH_1707 (120 aa).

The protein belongs to the UPF0102 family.

This chain is UPF0102 protein PTH_1707, found in Pelotomaculum thermopropionicum (strain DSM 13744 / JCM 10971 / SI).